The following is an 847-amino-acid chain: Protein IRS1 (847 aa).

Disordered regions lie at residues 1–82 (MAQR…NFWH), 607–627 (WLMEQPPPPSRQTKPDAATMP), and 715–847 (QVIP…HVHH). Residues 16-25 (RGRGAGGPSG) are compositionally biased toward gly residues. A compositionally biased stretch (low complexity) spans 26–56 (VGSSPPSSCVPMGATSTAGTGASAAPTATPG). The segment covering 723–733 (EPEDDDEDPTY) has biased composition (acidic residues). Over residues 833–847 (RPKKCQTHAPHHVHH) the composition is skewed to basic residues.

Belongs to the herpesviridae US22 family. In terms of assembly, interacts (via N-terminus) with the viral DNA polymerase accessory subunit UL44. Interacts (via C-terminus) with host EIF2AK2.

The protein resides in the virion. It localises to the host cytoplasm. Its subcellular location is the host nucleus. In terms of biological role, acts as a transactivator along with IE2, and is required for oriLyt-dependent DNA replication in the transient transfection replication assay using native promoters. The chain is Protein IRS1 (IRS1) from Human cytomegalovirus (strain Merlin) (HHV-5).